We begin with the raw amino-acid sequence, 501 residues long: Aromatase 3 (501 aa).

A heme-binding site is contributed by Cys435.

Belongs to the cytochrome P450 family. It depends on heme as a cofactor. As to expression, ovary.

The protein localises to the membrane. The catalysed reaction is testosterone + 3 reduced [NADPH--hemoprotein reductase] + 3 O2 = 17beta-estradiol + formate + 3 oxidized [NADPH--hemoprotein reductase] + 4 H2O + 4 H(+). It carries out the reaction androst-4-ene-3,17-dione + 3 reduced [NADPH--hemoprotein reductase] + 3 O2 = estrone + formate + 3 oxidized [NADPH--hemoprotein reductase] + 4 H2O + 4 H(+). Functionally, catalyzes the formation of aromatic C18 estrogens from C19 androgens. This is Aromatase 3 (CYP19A3) from Sus scrofa (Pig).